The following is a 192-amino-acid chain: Glycerol-3-phosphate acyltransferase (192 aa).

Helical transmembrane passes span 1–21 (MFIAILMGAYLLGSIPFAYIL), 49–69 (GLAGLVLLLDIAKSAVLIYSL), 80–100 (ELCIVGLLSVLGHIYPIWLKF), 110–130 (IGVIIPLNPLMLCVFFISWLF), and 143–163 (IVSIIATMIVCYLTESGVVAL).

The protein belongs to the PlsY family. In terms of assembly, probably interacts with PlsX.

It is found in the cell inner membrane. The catalysed reaction is an acyl phosphate + sn-glycerol 3-phosphate = a 1-acyl-sn-glycero-3-phosphate + phosphate. The protein operates within lipid metabolism; phospholipid metabolism. In terms of biological role, catalyzes the transfer of an acyl group from acyl-phosphate (acyl-PO(4)) to glycerol-3-phosphate (G3P) to form lysophosphatidic acid (LPA). This enzyme utilizes acyl-phosphate as fatty acyl donor, but not acyl-CoA or acyl-ACP. The chain is Glycerol-3-phosphate acyltransferase from Anaplasma phagocytophilum (strain HZ).